The chain runs to 200 residues: Peptidyl-tRNA hydrolase (200 aa).

Position 16 (F16) interacts with tRNA. The active-site Proton acceptor is the H21. TRNA-binding residues include F67, N69, and N115.

It belongs to the PTH family. In terms of assembly, monomer.

The protein resides in the cytoplasm. It catalyses the reaction an N-acyl-L-alpha-aminoacyl-tRNA + H2O = an N-acyl-L-amino acid + a tRNA + H(+). Hydrolyzes ribosome-free peptidyl-tRNAs (with 1 or more amino acids incorporated), which drop off the ribosome during protein synthesis, or as a result of ribosome stalling. In terms of biological role, catalyzes the release of premature peptidyl moieties from peptidyl-tRNA molecules trapped in stalled 50S ribosomal subunits, and thus maintains levels of free tRNAs and 50S ribosomes. This chain is Peptidyl-tRNA hydrolase, found in Prochlorococcus marinus (strain MIT 9215).